The primary structure comprises 55 residues: Small ribosomal subunit protein eS31 (55 aa).

Residues Cys26, Cys29, Cys44, and Cys47 each contribute to the Zn(2+) site.

The protein belongs to the eukaryotic ribosomal protein eS31 family. Part of the 30S ribosomal subunit. Zn(2+) serves as cofactor.

This Archaeoglobus fulgidus (strain ATCC 49558 / DSM 4304 / JCM 9628 / NBRC 100126 / VC-16) protein is Small ribosomal subunit protein eS31.